The primary structure comprises 292 residues: Elongation factor Ts (292 aa).

Residues 82–85 (TDFV) form an involved in Mg(2+) ion dislocation from EF-Tu region.

It belongs to the EF-Ts family.

Its subcellular location is the cytoplasm. Associates with the EF-Tu.GDP complex and induces the exchange of GDP to GTP. It remains bound to the aminoacyl-tRNA.EF-Tu.GTP complex up to the GTP hydrolysis stage on the ribosome. The sequence is that of Elongation factor Ts from Legionella pneumophila (strain Lens).